A 427-amino-acid polypeptide reads, in one-letter code: Enolase (427 aa).

Position 163 (Q163) interacts with (2R)-2-phosphoglycerate. E205 (proton donor) is an active-site residue. Mg(2+)-binding residues include D242, E285, and D312. Residues K337, R366, S367, and K388 each contribute to the (2R)-2-phosphoglycerate site. Catalysis depends on K337, which acts as the Proton acceptor.

Belongs to the enolase family. Mg(2+) is required as a cofactor.

The protein resides in the cytoplasm. It localises to the secreted. Its subcellular location is the cell surface. It catalyses the reaction (2R)-2-phosphoglycerate = phosphoenolpyruvate + H2O. Its pathway is carbohydrate degradation; glycolysis; pyruvate from D-glyceraldehyde 3-phosphate: step 4/5. Catalyzes the reversible conversion of 2-phosphoglycerate (2-PG) into phosphoenolpyruvate (PEP). It is essential for the degradation of carbohydrates via glycolysis. This is Enolase from Methylocella silvestris (strain DSM 15510 / CIP 108128 / LMG 27833 / NCIMB 13906 / BL2).